The following is a 593-amino-acid chain: SPI-1 type 3 secretion system translocon protein SctE (593 aa).

2 coiled-coil regions span residues 151–208 (DTAK…ATDA) and 287–314 (EGRQAEMEKKSAEFQEETRKAEETNRIM). The next 2 membrane-spanning stretches (helical) occupy residues 330–350 (VVAAVFTGGASLALAAVGLAV) and 409–429 (IVGAIVAAIAMVAVIVVVAVV).

It belongs to the SctE/SipB/YopB family. As to quaternary structure, the core secretion machinery of the T3SS is composed of approximately 20 different proteins, including cytoplasmic components, a base, an export apparatus and a needle. This subunit is involved in the formation of a pore, called the translocon, in host membrane.

It is found in the secreted. The protein localises to the host membrane. It localises to the host cell. Functionally, component of the type III secretion system 1 (SPI-1 T3SS), also called injectisome, which is used to inject bacterial effector proteins into eukaryotic host cells. SipB/SctE1 and SipC/SctB are inserted into the host membrane where they form a pore and allow the translocation of effector proteins into the cytosol of target cells. Induces macrophage apoptosis either by binding and activating the proapoptotic enzyme caspase-1 (caspase-1 dependent), resulting in the release of interleukin-1 beta active form, or by disrupting mitochondria and inducing autophagy (caspase-1 independent). The former is dependent of its membrane-fusion activity. The sequence is that of SPI-1 type 3 secretion system translocon protein SctE from Salmonella typhi.